The following is a 217-amino-acid chain: Putative threonylcarbamoyl-AMP synthase (217 aa).

In terms of domain architecture, YrdC-like spans 14–199 (SRGIVSAVGA…TPRVLRPGPV (186 aa)).

The protein belongs to the SUA5 family.

It is found in the cytoplasm. The catalysed reaction is L-threonine + hydrogencarbonate + ATP = L-threonylcarbamoyladenylate + diphosphate + H2O. Functionally, required for the formation of a threonylcarbamoyl group on adenosine at position 37 (t(6)A37) in tRNAs that read codons beginning with adenine. Catalyzes the conversion of L-threonine, HCO(3)(-)/CO(2) and ATP to give threonylcarbamoyl-AMP (TC-AMP) as the acyladenylate intermediate, with the release of diphosphate. This Mycobacterium tuberculosis (strain CDC 1551 / Oshkosh) protein is Putative threonylcarbamoyl-AMP synthase.